Consider the following 677-residue polypeptide: Methionine--tRNA ligase (677 aa).

The 'HIGH' region motif lies at 15–25 (PYANGSIHLGH). 4 residues coordinate Zn(2+): cysteine 146, cysteine 149, cysteine 159, and cysteine 162. A 'KMSKS' region motif is present at residues 333–337 (KMSKS). Lysine 336 is an ATP binding site. The region spanning 575–677 (DFAKIDLRVA…DGAKPGQQVK (103 aa)) is the tRNA-binding domain.

Belongs to the class-I aminoacyl-tRNA synthetase family. MetG type 1 subfamily. In terms of assembly, homodimer. The cofactor is Zn(2+).

It is found in the cytoplasm. It carries out the reaction tRNA(Met) + L-methionine + ATP = L-methionyl-tRNA(Met) + AMP + diphosphate. Its function is as follows. Is required not only for elongation of protein synthesis but also for the initiation of all mRNA translation through initiator tRNA(fMet) aminoacylation. This Salmonella paratyphi B (strain ATCC BAA-1250 / SPB7) protein is Methionine--tRNA ligase.